We begin with the raw amino-acid sequence, 40 residues long: Metallothionein-1 (40 aa).

Belongs to the metallothionein superfamily. Type 5 family.

This protein binds cations of several transition elements. It is thought to be involved in detoxification processes. This chain is Metallothionein-1 (MtnA), found in Drosophila melanogaster (Fruit fly).